A 511-amino-acid polypeptide reads, in one-letter code: Maturase K (511 aa).

The protein belongs to the intron maturase 2 family. MatK subfamily.

It localises to the plastid. It is found in the chloroplast. Its function is as follows. Usually encoded in the trnK tRNA gene intron. Probably assists in splicing its own and other chloroplast group II introns. This chain is Maturase K, found in Bowiea volubilis (Climbing onion).